The chain runs to 497 residues: Trichoplein keratin filament-binding protein (497 aa).

Coiled-coil stretches lie at residues histidine 67–glutamate 140, alanine 166–arginine 271, and methionine 327–methionine 479. An interaction with keratin proteins region spans residues lysine 72–glutamate 457. Residues threonine 167 to asparagine 188 are disordered. The span at glutamine 168–asparagine 188 shows a compositional bias: basic and acidic residues. The tract at residues arginine 258 to glutamate 424 is trichohyalin/plectin homology domain. The segment at alanine 441–aspartate 497 is disordered. Basic and acidic residues predominate over residues glutamine 444 to glutamine 453. Positions leucine 488–aspartate 497 are enriched in basic residues.

It belongs to the TCHP family. Interacts specifically with keratin proteins including, KRT5, KRT6A, KRT8, KRT14, KRT16 and KRT18. Interacts with KCTD17. Post-translationally, ubiquitinated. Ubiquitination by the BCR(KCTD17) E3 ubiquitin ligase complex results in proteasomal degradation, and induces ciliogenesis. As to expression, expressed in all tissues examined, including brain, liver, small intestine, large intestine, lung and heart. Found concentrated in tubular structures within hepatocytes, and in the apical cortical region and desmosomes of the apical junctional domain in enterocytes of the small intestine. In the hair follicle, localized at the outer root sheath. Also expressed in blood vessels (at protein level).

It is found in the cytoplasm. The protein resides in the cytoskeleton. It localises to the cell membrane. Its subcellular location is the mitochondrion. The protein localises to the microtubule organizing center. It is found in the centrosome. In terms of biological role, tumor suppressor which has the ability to inhibit cell growth and be pro-apoptotic during cell stress. May act as a 'capping' or 'branching' protein for keratin filaments in the cell periphery. May regulate K8/K18 filament and desmosome organization mainly at the apical or peripheral regions of simple epithelial cells. Is a negative regulator of ciliogenesis. This is Trichoplein keratin filament-binding protein from Mus musculus (Mouse).